The sequence spans 70 residues: PPF2L antigen (70 aa).

This Plasmodium falciparum (isolate Palo Alto / Uganda) protein is PPF2L antigen.